A 313-amino-acid polypeptide reads, in one-letter code: MSIINTSYVEITTFFLVGMPGLEYAHIWISIPICSMYLIAILGNGTILFIIKTEPSLHGPMYYFLSMLAMSDLGLSLSSLPTVLSIFLFNAPETSSSACFAQEFFIHGFSVLESSVLLIMSFDRFLAIHNPLRYTSILTTVRVAQIGIVFSFKSMLLVLPFPFTLRSLRYCKKNQLSHSYCLHQDVMKLACSDNRIDVIYGFFGALCLMVDFILIAVSYTLILKTVPGIASKKEELKALNTCVSHICAVIIFYLPIINLAVVHRFAGHVSPLINVLMANVLLLVPPLMKPIVYCVKTKQIRVRVVAKLCQWKI.

Over 1 to 27 the chain is Extracellular; it reads MSIINTSYVEITTFFLVGMPGLEYAHI. N5 is a glycosylation site (N-linked (GlcNAc...) asparagine). Residues 28–48 form a helical membrane-spanning segment; sequence WISIPICSMYLIAILGNGTIL. Over 49 to 56 the chain is Cytoplasmic; that stretch reads FIIKTEPS. Residues 57 to 77 form a helical membrane-spanning segment; it reads LHGPMYYFLSMLAMSDLGLSL. The Extracellular segment spans residues 78 to 101; it reads SSLPTVLSIFLFNAPETSSSACFA. Residues C99 and C191 are joined by a disulfide bond. A helical membrane pass occupies residues 102–122; it reads QEFFIHGFSVLESSVLLIMSF. Topologically, residues 123–141 are cytoplasmic; the sequence is DRFLAIHNPLRYTSILTTV. A helical membrane pass occupies residues 142-162; the sequence is RVAQIGIVFSFKSMLLVLPFP. Residues 163–198 lie on the Extracellular side of the membrane; the sequence is FTLRSLRYCKKNQLSHSYCLHQDVMKLACSDNRIDV. The helical transmembrane segment at 199–218 threads the bilayer; that stretch reads IYGFFGALCLMVDFILIAVS. Over 219-238 the chain is Cytoplasmic; it reads YTLILKTVPGIASKKEELKA. A helical transmembrane segment spans residues 239-259; that stretch reads LNTCVSHICAVIIFYLPIINL. Over 260 to 274 the chain is Extracellular; that stretch reads AVVHRFAGHVSPLIN. The helical transmembrane segment at 275–295 threads the bilayer; the sequence is VLMANVLLLVPPLMKPIVYCV. Over 296-313 the chain is Cytoplasmic; sequence KTKQIRVRVVAKLCQWKI.

This sequence belongs to the G-protein coupled receptor 1 family.

It localises to the cell membrane. Functionally, odorant receptor. The protein is Olfactory receptor 51A2 (OR51A2) of Homo sapiens (Human).